The following is a 374-amino-acid chain: Gibberellin 3-beta-dioxygenase 1 (374 aa).

The region spanning 206 to 307 (KACAALQLNS…RFSVAYLYGP (102 aa)) is the Fe2OG dioxygenase domain. The Fe cation site is built by histidine 231, aspartate 233, and histidine 288. Arginine 298 is a catalytic residue. Arginine 298 is a binding site for 2-oxoglutarate.

It belongs to the iron/ascorbate-dependent oxidoreductase family. GA3OX subfamily. Requires L-ascorbate as cofactor. The cofactor is Fe(2+). As to expression, expressed in radicles, roots, internodes, cotyledons, leaves and shoots. Barely detected in developing seeds. Not detected in flowers or young fruits.

The catalysed reaction is gibberellin A20 + 2-oxoglutarate + O2 = gibberellin A1 + succinate + CO2. It functions in the pathway plant hormone biosynthesis; gibberellin biosynthesis. Functionally, converts the inactive gibberellin (GA) precursors GA9 and GA20 in the bioactives gibberellins GA4 and GA1. Has a small activity on GA29, producing GA8. Unable to convert GA20 to GA5, GA5 to GA3 or GA12 to GA14. Involved in the production of bioactive GA for vegetative growth and development, but not for the 3-beta-hydroxylation of GA in developing seeds. In Pisum sativum (Garden pea), this protein is Gibberellin 3-beta-dioxygenase 1 (LE).